A 33-amino-acid polypeptide reads, in one-letter code: MSDIN-like toxin proprotein 5 (33 aa).

A propeptide spanning residues 1 to 10 (MSDINATRLP) is cleaved from the precursor. Residues 11 to 18 (IFWFIYFP) constitute a cross-link (cyclopeptide (Ile-Pro)). A propeptide spanning residues 19–32 (CVGDNVDNTLTRGE) is cleaved from the precursor.

This sequence belongs to the MSDIN fungal toxin family. Processed by the macrocyclase-peptidase enzyme POPB to yield a toxic cyclic octapeptide. POPB first removes 10 residues from the N-terminus. Conformational trapping of the remaining peptide forces the enzyme to release this intermediate rather than proceed to macrocyclization. The enzyme rebinds the remaining peptide in a different conformation and catalyzes macrocyclization of the N-terminal 8 residues.

In terms of biological role, probable toxin that belongs to the MSDIN-like toxin family responsible for a large number of food poisoning cases and deaths. The polypeptide is MSDIN-like toxin proprotein 5 (Amanita phalloides (Death cap)).